A 109-amino-acid chain; its full sequence is ATP synthase subunit c (109 aa).

Helical transmembrane passes span 42 to 62 (YIGTGITMLAAGAVGLMQGFS) and 88 to 108 (LALAEAVAIYALIVSILIIFV).

The protein belongs to the ATPase C chain family. As to quaternary structure, F-type ATPases have 2 components, F(1) - the catalytic core - and F(0) - the membrane proton channel. F(1) has five subunits: alpha(3), beta(3), gamma(1), delta(1), epsilon(1). F(0) has three main subunits: a(1), b(2) and c(10-14). The alpha and beta chains form an alternating ring which encloses part of the gamma chain. F(1) is attached to F(0) by a central stalk formed by the gamma and epsilon chains, while a peripheral stalk is formed by the delta and b chains.

It localises to the cell membrane. Functionally, f(1)F(0) ATP synthase produces ATP from ADP in the presence of a proton or sodium gradient. F-type ATPases consist of two structural domains, F(1) containing the extramembraneous catalytic core and F(0) containing the membrane proton channel, linked together by a central stalk and a peripheral stalk. During catalysis, ATP synthesis in the catalytic domain of F(1) is coupled via a rotary mechanism of the central stalk subunits to proton translocation. Its function is as follows. Key component of the F(0) channel; it plays a direct role in translocation across the membrane. A homomeric c-ring of between 10-14 subunits forms the central stalk rotor element with the F(1) delta and epsilon subunits. The protein is ATP synthase subunit c of Ureaplasma urealyticum serovar 10 (strain ATCC 33699 / Western).